The chain runs to 1008 residues: DNA polymerase (1008 aa).

It belongs to the DNA polymerase type-B family. In terms of assembly, interacts with A20. Component of the Uracil-DNA glycosylase(UDG)-A20-polymerase complex; A20 and UDG form a heterodimeric processivity factor that associates with E9 to form the processive polymerase holoenzyme.

The enzyme catalyses DNA(n) + a 2'-deoxyribonucleoside 5'-triphosphate = DNA(n+1) + diphosphate. Functionally, catalyzes DNA synthesis. Acquires processivity by associating with a heterodimeric processivity factor comprised of the viral A20 and D4 proteins, thereby forming the DNA polymerase holoenzyme. Displays 3'- to 5' exonuclease activity. Might participate in viral DNA recombination. Does not perform translesion synthesis across an abasic site. This chain is DNA polymerase (POL), found in Capra hircus (Goat).